Here is a 291-residue protein sequence, read N- to C-terminus: Pantothenate synthetase (291 aa).

30–37 (MGYLHVGH) contributes to the ATP binding site. Residue H37 is the Proton donor of the active site. Q61 is a (R)-pantoate binding site. Q61 lines the beta-alanine pocket. An ATP-binding site is contributed by 147–150 (GEKD). Q153 provides a ligand contact to (R)-pantoate. Residues V176 and 184-187 (CSSR) contribute to the ATP site.

This sequence belongs to the pantothenate synthetase family. Homodimer.

It localises to the cytoplasm. The catalysed reaction is (R)-pantoate + beta-alanine + ATP = (R)-pantothenate + AMP + diphosphate + H(+). The protein operates within cofactor biosynthesis; (R)-pantothenate biosynthesis; (R)-pantothenate from (R)-pantoate and beta-alanine: step 1/1. Functionally, catalyzes the condensation of pantoate with beta-alanine in an ATP-dependent reaction via a pantoyl-adenylate intermediate. The chain is Pantothenate synthetase from Sinorhizobium medicae (strain WSM419) (Ensifer medicae).